The primary structure comprises 424 residues: UPF0229 protein ECA2349 (424 aa).

Positions Ser53 to Asp111 are disordered. Over residues Pro77 to Arg90 the composition is skewed to basic and acidic residues. Gly residues predominate over residues Gln92–Gln101.

The protein belongs to the UPF0229 family.

This is UPF0229 protein ECA2349 from Pectobacterium atrosepticum (strain SCRI 1043 / ATCC BAA-672) (Erwinia carotovora subsp. atroseptica).